The chain runs to 199 residues: Mediator of RNA polymerase II transcription subunit 7 (199 aa).

Belongs to the Mediator complex subunit 7 family. In terms of assembly, component of the Mediator complex.

It localises to the nucleus. Its function is as follows. Component of the Mediator complex, a coactivator involved in the regulated transcription of nearly all RNA polymerase II-dependent genes. Mediator functions as a bridge to convey information from gene-specific regulatory proteins to the basal RNA polymerase II transcription machinery. Mediator is recruited to promoters by direct interactions with regulatory proteins and serves as a scaffold for the assembly of a functional preinitiation complex with RNA polymerase II and the general transcription factors. The sequence is that of Mediator of RNA polymerase II transcription subunit 7 (MED7) from Eremothecium gossypii (strain ATCC 10895 / CBS 109.51 / FGSC 9923 / NRRL Y-1056) (Yeast).